Reading from the N-terminus, the 157-residue chain is Small ribosomal subunit protein uS7 (157 aa).

This sequence belongs to the universal ribosomal protein uS7 family. As to quaternary structure, part of the 30S ribosomal subunit. Contacts proteins S9 and S11.

Functionally, one of the primary rRNA binding proteins, it binds directly to 16S rRNA where it nucleates assembly of the head domain of the 30S subunit. Is located at the subunit interface close to the decoding center, probably blocks exit of the E-site tRNA. This is Small ribosomal subunit protein uS7 from Verminephrobacter eiseniae (strain EF01-2).